A 211-amino-acid chain; its full sequence is Large ribosomal subunit protein uL4 (211 aa).

Residues Gln40 to Gly87 form a disordered region. Polar residues predominate over residues Gln41–Arg54. Positions Gly60–Gly71 are enriched in basic residues.

It belongs to the universal ribosomal protein uL4 family. Part of the 50S ribosomal subunit.

Functionally, one of the primary rRNA binding proteins, this protein initially binds near the 5'-end of the 23S rRNA. It is important during the early stages of 50S assembly. It makes multiple contacts with different domains of the 23S rRNA in the assembled 50S subunit and ribosome. Its function is as follows. Forms part of the polypeptide exit tunnel. This chain is Large ribosomal subunit protein uL4, found in Synechococcus sp. (strain WH7803).